The chain runs to 870 residues: Elastin (870 aa).

The first 27 residues, 1 to 27 (MAGLTAAVPQPGVLLILLLNLLHPAQP), serve as a signal peptide directing secretion. A 4-hydroxyproline mark is found at Pro-39 and Pro-75. Pro-87 carries the hydroxyproline modification. Pro-105 carries the 4-hydroxyproline modification. Lys-122 and Lys-126 each carry allysine. 4-hydroxyproline is present on residues Pro-207, Pro-220, Pro-223, and Pro-244. Allysine occurs at positions 290 and 309. Position 338 is a 4-hydroxyproline (Pro-338). 2 positions are modified to allysine: Lys-360 and Lys-363. Pro-375 carries the post-translational modification Hydroxyproline. 4-hydroxyproline occurs at positions 402 and 408. Pro-413 and Pro-418 each carry hydroxyproline. Allysine is present on residues Lys-434, Lys-438, Lys-441, Lys-485, and Lys-488. A 4-hydroxyproline mark is found at Pro-518 and Pro-539. Allysine occurs at positions 554, 558, 615, 619, and 623. 4-hydroxyproline is present on residues Pro-637, Pro-646, Pro-662, and Pro-670. Allysine is present on residues Lys-677 and Lys-680. Residue Pro-715 is modified to 4-hydroxyproline. Allysine is present on residues Lys-730, Lys-734, Lys-793, and Lys-796. Position 842 is a 4-hydroxyproline (Pro-842). An intrachain disulfide couples Cys-860 to Cys-865.

It belongs to the elastin family. The polymeric elastin chains are cross-linked together into an extensible 3D network. Forms a ternary complex with BGN and MFAP2. Interacts with MFAP2 via divalent cations (calcium &gt; magnesium &gt; manganese) in a dose-dependent and saturating manner. Interacts with FBLN5 and FBN1. Forms a ternary complex with FBN1 and FBLN2 or FBLN5. Interacts with MFAP4 in a Ca (2+)-dependent manner; this interaction promotes ELN self-assembly. Interacts with EFEMP2 with moderate affinity. Post-translationally, elastin is formed through the cross-linking of its soluble precursor tropoelastin. Cross-linking is initiated through the action of lysyl oxidase on exposed lysines to form allysine. Subsequent spontaneous condensation reactions with other allysine or unmodified lysine residues result in various bi-, tri-, and tetrafunctional cross-links. The most abundant cross-links in mature elastin fibers are lysinonorleucine, allysine aldol, desmosine, and isodesmosine. Hydroxylation on proline residues within the sequence motif, GXPG, is most likely to be 4-hydroxy as this fits the requirement for 4-hydroxylation in vertebrates.

It localises to the secreted. The protein localises to the extracellular space. It is found in the extracellular matrix. In terms of biological role, major structural protein of tissues such as aorta and nuchal ligament, which must expand rapidly and recover completely. Molecular determinant of the late arterial morphogenesis, stabilizing arterial structure by regulating proliferation and organization of vascular smooth muscle. The polypeptide is Elastin (Eln) (Rattus norvegicus (Rat)).